Here is an 84-residue protein sequence, read N- to C-terminus: Small ribosomal subunit protein uS17 (84 aa).

Belongs to the universal ribosomal protein uS17 family. Part of the 30S ribosomal subunit.

Functionally, one of the primary rRNA binding proteins, it binds specifically to the 5'-end of 16S ribosomal RNA. The chain is Small ribosomal subunit protein uS17 from Thermoanaerobacter pseudethanolicus (strain ATCC 33223 / 39E) (Clostridium thermohydrosulfuricum).